A 248-amino-acid polypeptide reads, in one-letter code: Ubiquinone biosynthesis O-methyltransferase (248 aa).

Residues R41, G72, D93, and M136 each coordinate S-adenosyl-L-methionine.

This sequence belongs to the methyltransferase superfamily. UbiG/COQ3 family.

The enzyme catalyses a 3-demethylubiquinol + S-adenosyl-L-methionine = a ubiquinol + S-adenosyl-L-homocysteine + H(+). It carries out the reaction a 3-(all-trans-polyprenyl)benzene-1,2-diol + S-adenosyl-L-methionine = a 2-methoxy-6-(all-trans-polyprenyl)phenol + S-adenosyl-L-homocysteine + H(+). The protein operates within cofactor biosynthesis; ubiquinone biosynthesis. O-methyltransferase that catalyzes the 2 O-methylation steps in the ubiquinone biosynthetic pathway. This Rhizobium johnstonii (strain DSM 114642 / LMG 32736 / 3841) (Rhizobium leguminosarum bv. viciae) protein is Ubiquinone biosynthesis O-methyltransferase.